Reading from the N-terminus, the 250-residue chain is Ubiquinone/menaquinone biosynthesis C-methyltransferase UbiE (250 aa).

Residues Thr-73, Asp-94, 122-123 (NA), and Ser-139 each bind S-adenosyl-L-methionine.

Belongs to the class I-like SAM-binding methyltransferase superfamily. MenG/UbiE family.

The enzyme catalyses a 2-demethylmenaquinol + S-adenosyl-L-methionine = a menaquinol + S-adenosyl-L-homocysteine + H(+). It carries out the reaction a 2-methoxy-6-(all-trans-polyprenyl)benzene-1,4-diol + S-adenosyl-L-methionine = a 5-methoxy-2-methyl-3-(all-trans-polyprenyl)benzene-1,4-diol + S-adenosyl-L-homocysteine + H(+). The protein operates within quinol/quinone metabolism; menaquinone biosynthesis; menaquinol from 1,4-dihydroxy-2-naphthoate: step 2/2. Its pathway is cofactor biosynthesis; ubiquinone biosynthesis. Functionally, methyltransferase required for the conversion of demethylmenaquinol (DMKH2) to menaquinol (MKH2) and the conversion of 2-polyprenyl-6-methoxy-1,4-benzoquinol (DDMQH2) to 2-polyprenyl-3-methyl-6-methoxy-1,4-benzoquinol (DMQH2). This is Ubiquinone/menaquinone biosynthesis C-methyltransferase UbiE from Francisella philomiragia subsp. philomiragia (strain ATCC 25017 / CCUG 19701 / FSC 153 / O#319-036).